We begin with the raw amino-acid sequence, 244 residues long: Probable phosphatase NT01CX_1282 (244 aa).

9 residues coordinate Zn(2+): histidine 8, histidine 10, histidine 16, histidine 41, glutamate 74, histidine 102, histidine 132, aspartate 193, and histidine 195.

It belongs to the PHP family. The cofactor is Zn(2+).

The protein is Probable phosphatase NT01CX_1282 of Clostridium novyi (strain NT).